Here is a 141-residue protein sequence, read N- to C-terminus: Large ribosomal subunit protein uL11A (141 aa).

The protein belongs to the universal ribosomal protein uL11 family. Part of the ribosomal stalk of the 50S ribosomal subunit. Interacts with L10 and the large rRNA to form the base of the stalk. L10 forms an elongated spine to which L12 dimers bind in a sequential fashion forming a multimeric L10(L12)X complex. Post-translationally, one or more lysine residues are methylated.

In terms of biological role, forms part of the ribosomal stalk which helps the ribosome interact with GTP-bound translation factors. This chain is Large ribosomal subunit protein uL11A, found in Halalkalibacterium halodurans (strain ATCC BAA-125 / DSM 18197 / FERM 7344 / JCM 9153 / C-125) (Bacillus halodurans).